A 596-amino-acid polypeptide reads, in one-letter code: Probable protein phosphatase 2C 26 (596 aa).

The tract at residues 122–154 (SGPLDPAVPFSGPLPAKPPKPASSSSRGFSRRF) is disordered. Positions 177–584 (LRRDDGVQWA…DDVTVMVISL (408 aa)) constitute a PPM-type phosphatase domain. Mn(2+) contacts are provided by D212, G213, D512, and D575.

This sequence belongs to the PP2C family. Mg(2+) serves as cofactor. It depends on Mn(2+) as a cofactor.

The enzyme catalyses O-phospho-L-seryl-[protein] + H2O = L-seryl-[protein] + phosphate. The catalysed reaction is O-phospho-L-threonyl-[protein] + H2O = L-threonyl-[protein] + phosphate. The protein is Probable protein phosphatase 2C 26 of Oryza sativa subsp. japonica (Rice).